Here is a 124-residue protein sequence, read N- to C-terminus: Large ribosomal subunit protein bL12 (124 aa).

This sequence belongs to the bacterial ribosomal protein bL12 family. Homodimer. Part of the ribosomal stalk of the 50S ribosomal subunit. Forms a multimeric L10(L12)X complex, where L10 forms an elongated spine to which 2 to 4 L12 dimers bind in a sequential fashion. Binds GTP-bound translation factors.

Forms part of the ribosomal stalk which helps the ribosome interact with GTP-bound translation factors. Is thus essential for accurate translation. This chain is Large ribosomal subunit protein bL12, found in Chlorobium chlorochromatii (strain CaD3).